A 585-amino-acid chain; its full sequence is Pyruvate kinase (585 aa).

Arg-32 is a binding site for substrate. K(+)-binding residues include Asn-34, Ser-36, Asp-66, and Thr-67. Asn-34 to His-37 provides a ligand contact to ATP. ATP is bound by residues Arg-73 and Lys-156. Residue Glu-222 coordinates Mg(2+). Positions 245, 246, and 278 each coordinate substrate. Asp-246 provides a ligand contact to Mg(2+).

Belongs to the pyruvate kinase family. This sequence in the C-terminal section; belongs to the PEP-utilizing enzyme family. In terms of assembly, homotetramer. Requires Mg(2+) as cofactor. K(+) is required as a cofactor.

The enzyme catalyses pyruvate + ATP = phosphoenolpyruvate + ADP + H(+). It functions in the pathway carbohydrate degradation; glycolysis; pyruvate from D-glyceraldehyde 3-phosphate: step 5/5. This chain is Pyruvate kinase (pyk), found in Bacillus licheniformis.